We begin with the raw amino-acid sequence, 266 residues long: 4-hydroxy-tetrahydrodipicolinate reductase (266 aa).

NAD(+)-binding positions include 8-13 (GAAGRM) and E33. R34 contacts NADP(+). NAD(+) is bound by residues 97 to 99 (GST) and 121 to 124 (APNM). Catalysis depends on H154, which acts as the Proton donor/acceptor. Position 155 (H155) interacts with (S)-2,3,4,5-tetrahydrodipicolinate. Catalysis depends on K158, which acts as the Proton donor. A (S)-2,3,4,5-tetrahydrodipicolinate-binding site is contributed by 164-165 (GT).

The protein belongs to the DapB family.

The protein resides in the cytoplasm. It catalyses the reaction (S)-2,3,4,5-tetrahydrodipicolinate + NAD(+) + H2O = (2S,4S)-4-hydroxy-2,3,4,5-tetrahydrodipicolinate + NADH + H(+). The catalysed reaction is (S)-2,3,4,5-tetrahydrodipicolinate + NADP(+) + H2O = (2S,4S)-4-hydroxy-2,3,4,5-tetrahydrodipicolinate + NADPH + H(+). Its pathway is amino-acid biosynthesis; L-lysine biosynthesis via DAP pathway; (S)-tetrahydrodipicolinate from L-aspartate: step 4/4. Its function is as follows. Catalyzes the conversion of 4-hydroxy-tetrahydrodipicolinate (HTPA) to tetrahydrodipicolinate. The chain is 4-hydroxy-tetrahydrodipicolinate reductase from Geobacter metallireducens (strain ATCC 53774 / DSM 7210 / GS-15).